The primary structure comprises 201 residues: NAD(P)H quinone oxidoreductase PST2 (201 aa).

The Flavodoxin-like domain occupies 6 to 192; it reads VAIIIYSLYH…SIAQQQGEDF (187 aa). FMN contacts are provided by residues 12–16 and 112–164; these read SLYHH and VFVS…SPWG.

This sequence belongs to the WrbA family. FMN serves as cofactor.

It is found in the cell membrane. The catalysed reaction is a quinone + NADH + H(+) = a quinol + NAD(+). It carries out the reaction a quinone + NADPH + H(+) = a quinol + NADP(+). Its function is as follows. Flavodoxin-like protein (FLP) that plays a role in cell wall integrity, oxidative stress protection and virulence. FLPs act as NAD(P)H quinone oxidoreductases. Reduces ubiquinone (coenzyme Q), enabling it to serve as an antioxidant in the membrane. The chain is NAD(P)H quinone oxidoreductase PST2 from Candida albicans (strain SC5314 / ATCC MYA-2876) (Yeast).